A 468-amino-acid chain; its full sequence is ATP synthase subunit beta 2 (468 aa).

ATP is bound at residue 155-162 (GGAGVGKT).

This sequence belongs to the ATPase alpha/beta chains family. As to quaternary structure, F-type ATPases have 2 components, CF(1) - the catalytic core - and CF(0) - the membrane proton channel. CF(1) has five subunits: alpha(3), beta(3), gamma(1), delta(1), epsilon(1). CF(0) has four main subunits: a(1), b(1), b'(1) and c(9-12).

Its subcellular location is the cell inner membrane. It catalyses the reaction ATP + H2O + 4 H(+)(in) = ADP + phosphate + 5 H(+)(out). Functionally, produces ATP from ADP in the presence of a proton gradient across the membrane. The catalytic sites are hosted primarily by the beta subunits. This Chlorobium luteolum (strain DSM 273 / BCRC 81028 / 2530) (Pelodictyon luteolum) protein is ATP synthase subunit beta 2.